The following is a 1224-amino-acid chain: ATP-dependent helicase/deoxyribonuclease subunit B (1224 aa).

The UvrD-like helicase ATP-binding domain maps to 1–326 (MSLRFILGRA…VCAAANRRSE (326 aa)). 8-15 (GRAGTGKS) is a binding site for ATP. In terms of domain architecture, UvrD-like helicase C-terminal spans 283–584 (QSAPRFQHPE…KLSLIPPELD (302 aa)). Positions 841, 1176, 1179, and 1185 each coordinate [4Fe-4S] cluster.

Belongs to the helicase family. AddB/RexB type 1 subfamily. In terms of assembly, heterodimer of AddA and AddB. It depends on Mg(2+) as a cofactor. The cofactor is [4Fe-4S] cluster.

The heterodimer acts as both an ATP-dependent DNA helicase and an ATP-dependent, dual-direction single-stranded exonuclease. Recognizes the chi site generating a DNA molecule suitable for the initiation of homologous recombination. The AddB subunit has 5' -&gt; 3' nuclease activity but not helicase activity. The chain is ATP-dependent helicase/deoxyribonuclease subunit B from Heliobacterium modesticaldum (strain ATCC 51547 / Ice1).